Here is a 474-residue protein sequence, read N- to C-terminus: MTFQLSPELAAVVDSGLLSPVRAGTPVEAAVSDAAWLAAMVEAETALVRAQARLGTVPESAAAAIVEAARPERLDLVALARASRETANPVVGFVKALTAVVAAEDPAAAEYVHRGSTSQDILDTATMLVVRRAGVLIRADLDRCAAALERLARTHRATPMAGRTLTLHAVPTTFGLKAAGWLHLVTEARRRTAALAAALPVELGGAAGTLAGYLEHANNPGDDYADRLVEAYAHETGLAPATLPWHVLRTPIADTGAVCAFLAAALGKIAVDVQSLARTEVGEVTEPAVAGRGASSAMPHKRNPVLATLIRSAALQVPQHAAVLYGAMLAEDERSGGAWHAEWQPLRECLRLAGGAAHTAVELLTGLTVDADRMRANLDLTGGQIVSERVAAVLTPLLGKAQARALLTRASHEAADRGTSLAEVLSAAPEVTRHLTAAELEELLDPTRYLGAAPGLVDRAVGGPDRAVPHRSAA.

The Proton acceptor role is filled by Ser-295. 2 residues coordinate fumarate: Lys-301 and Asn-303. Arg-334 acts as the Proton donor in catalysis.

Belongs to the class-II fumarase/aspartase family.

The enzyme catalyses 2-nitrobutanedioate = fumarate + nitrite + H(+). Involved in the biosynthesis of desferrioxamine derivatives which have iron-binding properties and may act as siderophores. Catalyzes the formation of nitrous acid from nitrosuccinic acid (2-nitrobutanedioate) by elimination of its nitro group. This is Nitrosuccinate lyase from Streptomyces davaonensis (strain DSM 101723 / JCM 4913 / KCC S-0913 / 768).